Reading from the N-terminus, the 288-residue chain is Eukaryotic translation initiation factor 3 subunit G (288 aa).

Residues 1–33 are disordered; sequence MSRVANNRDWADDEDLEDSNELPQSTTTTNKDG. The segment covering 11 to 20 has biased composition (acidic residues); the sequence is ADDEDLEDSN. Polar residues predominate over residues 21-33; the sequence is ELPQSTTTTNKDG. In terms of domain architecture, RRM spans 208-286; the sequence is ATLRVTNVSE…LILRVEFAKK (79 aa).

It belongs to the eIF-3 subunit G family. As to quaternary structure, component of the eukaryotic translation initiation factor 3 (eIF-3) complex.

Its subcellular location is the cytoplasm. Functionally, RNA-binding component of the eukaryotic translation initiation factor 3 (eIF-3) complex, which is involved in protein synthesis of a specialized repertoire of mRNAs and, together with other initiation factors, stimulates binding of mRNA and methionyl-tRNAi to the 40S ribosome. The eIF-3 complex specifically targets and initiates translation of a subset of mRNAs involved in cell proliferation. This subunit can bind 18S rRNA. In Sclerotinia sclerotiorum (strain ATCC 18683 / 1980 / Ss-1) (White mold), this protein is Eukaryotic translation initiation factor 3 subunit G (tif35).